The sequence spans 231 residues: Large ribosomal subunit protein uL1 (231 aa).

It belongs to the universal ribosomal protein uL1 family. In terms of assembly, part of the 50S ribosomal subunit.

Binds directly to 23S rRNA. The L1 stalk is quite mobile in the ribosome, and is involved in E site tRNA release. In terms of biological role, protein L1 is also a translational repressor protein, it controls the translation of the L11 operon by binding to its mRNA. The protein is Large ribosomal subunit protein uL1 of Alcanivorax borkumensis (strain ATCC 700651 / DSM 11573 / NCIMB 13689 / SK2).